The primary structure comprises 310 residues: Homoserine kinase (310 aa).

91–101 (PIGSGLGSSAC) is a binding site for ATP.

This sequence belongs to the GHMP kinase family. Homoserine kinase subfamily.

Its subcellular location is the cytoplasm. The enzyme catalyses L-homoserine + ATP = O-phospho-L-homoserine + ADP + H(+). It functions in the pathway amino-acid biosynthesis; L-threonine biosynthesis; L-threonine from L-aspartate: step 4/5. In terms of biological role, catalyzes the ATP-dependent phosphorylation of L-homoserine to L-homoserine phosphate. The polypeptide is Homoserine kinase (Shigella sonnei (strain Ss046)).